Consider the following 185-residue polypeptide: Large ribosomal subunit protein uL5 (185 aa).

The protein belongs to the universal ribosomal protein uL5 family. Part of the 50S ribosomal subunit; part of the 5S rRNA/L5/L18/L25 subcomplex. Contacts the 5S rRNA and the P site tRNA. Forms a bridge to the 30S subunit in the 70S ribosome.

In terms of biological role, this is one of the proteins that bind and probably mediate the attachment of the 5S RNA into the large ribosomal subunit, where it forms part of the central protuberance. In the 70S ribosome it contacts protein S13 of the 30S subunit (bridge B1b), connecting the 2 subunits; this bridge is implicated in subunit movement. Contacts the P site tRNA; the 5S rRNA and some of its associated proteins might help stabilize positioning of ribosome-bound tRNAs. This Protochlamydia amoebophila (strain UWE25) protein is Large ribosomal subunit protein uL5.